The chain runs to 211 residues: Outer-membrane lipoprotein carrier protein (211 aa).

The N-terminal stretch at 1-24 (MRNRIIVSACAALAMFAIQAPAHA) is a signal peptide.

It belongs to the LolA family. Monomer.

It is found in the periplasm. In terms of biological role, participates in the translocation of lipoproteins from the inner membrane to the outer membrane. Only forms a complex with a lipoprotein if the residue after the N-terminal Cys is not an aspartate (The Asp acts as a targeting signal to indicate that the lipoprotein should stay in the inner membrane). This is Outer-membrane lipoprotein carrier protein from Cupriavidus necator (strain ATCC 17699 / DSM 428 / KCTC 22496 / NCIMB 10442 / H16 / Stanier 337) (Ralstonia eutropha).